We begin with the raw amino-acid sequence, 139 residues long: Spermatogenesis-associated protein 33 (139 aa).

The segment at 1–67 (MVTHAAGART…TAKHPPPAAS (67 aa)) is interaction with ATG16L1. The interval 1–83 (MVTHAAGART…VKQKSSRKKV (83 aa)) is disordered. A compositionally biased stretch (basic and acidic residues) spans 25–50 (KSKEKLMEKHSQEARQADRESEKPVD). Residues 68 to 139 (LEEKPDVKQK…ADAYNSHLKE (72 aa)) are interaction with VDAC2. The short motif at 86 to 91 (PQIIIT) is the PQIIIT element. Ser-94 carries the post-translational modification Phosphoserine. Positions 97–109 (TLVSCSSSGSDQQ) are enriched in polar residues. Positions 97–139 (TLVSCSSSGSDQQRTIREPEDWGPYRRHRNPSTADAYNSHLKE) are disordered. Positions 110–120 (RTIREPEDWGP) are enriched in basic and acidic residues.

As to quaternary structure, interacts (via PQIIIT motif) with PPP3R1, PPP3R2, PPP3CA, PPP3CB and PPP3CC. Interacts with VDAC2. Interacts with ATG16L1 (via WD repeats).

It is found in the cytoplasm. The protein resides in the cytosol. It localises to the nucleus. Its subcellular location is the mitochondrion. Its function is as follows. Plays an important role in sperm motility and male fertility. Required for sperm midpiece flexibility and for the localization of sperm calcineurin to the mitochondria. Promotes mitophagy as well as acts as an autophagy mediator in male germline cells. Links damaged mitochondria to autophagosomes via its binding to the outer mitochondrial membrane protein VDAC2, as well as to key autophagy machinery component ATG16L1. The sequence is that of Spermatogenesis-associated protein 33 (SPATA33) from Homo sapiens (Human).